An 84-amino-acid polypeptide reads, in one-letter code: Mu-conotoxin-like Cal 12.2a (84 aa).

Residues 1–19 (MKLTCVLVVLLLVLPFGDL) form the signal peptide. Positions 20-42 (ITTSNTEDNKRGATPWQNSLKAR) are excised as a propeptide. 4 cysteine pairs are disulfide-bonded: Cys-45–Cys-57, Cys-52–Cys-65, Cys-59–Cys-70, and Cys-64–Cys-76. Pro-48 bears the 4-hydroxyproline mark. Trp-72 carries the post-translational modification 6'-bromotryptophan. Residue Pro-77 is modified to 4-hydroxyproline. Trp-81 carries the post-translational modification 6'-bromotryptophan.

It belongs to the conotoxin O1 superfamily. As to expression, expressed by the venom duct.

It localises to the secreted. Functionally, mu-conotoxins block voltage-gated sodium channels. This toxin reversibly blocks voltage-gated sodium channel in cephalopods, with no alteration in the voltage dependence of sodium conductance or on the kinetics of inactivation. The polypeptide is Mu-conotoxin-like Cal 12.2a (Californiconus californicus (California cone)).